The following is a 185-amino-acid chain: Ribosome-recycling factor (185 aa).

The protein belongs to the RRF family.

Its subcellular location is the cytoplasm. Its function is as follows. Responsible for the release of ribosomes from messenger RNA at the termination of protein biosynthesis. May increase the efficiency of translation by recycling ribosomes from one round of translation to another. This is Ribosome-recycling factor from Clostridioides difficile (strain 630) (Peptoclostridium difficile).